A 202-amino-acid chain; its full sequence is Transcriptional regulator SdrP (202 aa).

An HTH crp-type domain is found at 117 to 189; that stretch reads QRLKNRMAAA…YGKIQLLDLK (73 aa). The H-T-H motif DNA-binding region spans 149-168; the sequence is HDELAAAVGSVRETVTKVIG.

As to quaternary structure, homodimer.

Activates transcription. The consensus DNA-binding site of this transcriptional regulator is 5'-WWGTGAN(5-7)ACACWW-3' in which W is A or T and N is G, A, T or C. Regulated genes include those encoding proteins involved in nutrient and energy supply, redox control and polyadenylation of mRNA. Also regulates genes involved in oxidative stress response such as genes encoding manganese superoxide dismutase and catalase, and genes encoding a protein involved in nucleotide excision repair of damaged DNA and putative proteins involved in redox control, protein degradation and transcriptional regulation. In Thermus thermophilus (strain ATCC 27634 / DSM 579 / HB8), this protein is Transcriptional regulator SdrP.